We begin with the raw amino-acid sequence, 263 residues long: 3-deoxy-manno-octulosonate cytidylyltransferase (263 aa).

This sequence belongs to the KdsB family.

Its subcellular location is the cytoplasm. It catalyses the reaction 3-deoxy-alpha-D-manno-oct-2-ulosonate + CTP = CMP-3-deoxy-beta-D-manno-octulosonate + diphosphate. It participates in nucleotide-sugar biosynthesis; CMP-3-deoxy-D-manno-octulosonate biosynthesis; CMP-3-deoxy-D-manno-octulosonate from 3-deoxy-D-manno-octulosonate and CTP: step 1/1. It functions in the pathway bacterial outer membrane biogenesis; lipopolysaccharide biosynthesis. In terms of biological role, activates KDO (a required 8-carbon sugar) for incorporation into bacterial lipopolysaccharide in Gram-negative bacteria. This Burkholderia vietnamiensis (strain G4 / LMG 22486) (Burkholderia cepacia (strain R1808)) protein is 3-deoxy-manno-octulosonate cytidylyltransferase.